Here is a 259-residue protein sequence, read N- to C-terminus: Phosphatidylglycerol--prolipoprotein diacylglyceryl transferase (259 aa).

The next 4 helical transmembrane spans lie at 10–30, 50–70, 86–106, and 112–132; these read IGLL…LFAY, IISW…ILFY, WKGG…MYIF, and IKFL…IFLG. R133 is an a 1,2-diacyl-sn-glycero-3-phospho-(1'-sn-glycerol) binding site. Helical transmembrane passes span 169–189, 197–217, and 227–247; these read LYEA…LFFF, GMLF…IEFV, and ILFN…ILGI.

It belongs to the Lgt family.

Its subcellular location is the cell inner membrane. The catalysed reaction is L-cysteinyl-[prolipoprotein] + a 1,2-diacyl-sn-glycero-3-phospho-(1'-sn-glycerol) = an S-1,2-diacyl-sn-glyceryl-L-cysteinyl-[prolipoprotein] + sn-glycerol 1-phosphate + H(+). It functions in the pathway protein modification; lipoprotein biosynthesis (diacylglyceryl transfer). Its function is as follows. Catalyzes the transfer of the diacylglyceryl group from phosphatidylglycerol to the sulfhydryl group of the N-terminal cysteine of a prolipoprotein, the first step in the formation of mature lipoproteins. The chain is Phosphatidylglycerol--prolipoprotein diacylglyceryl transferase from Ehrlichia ruminantium (strain Welgevonden).